A 178-amino-acid polypeptide reads, in one-letter code: PEST proteolytic signal-containing nuclear protein (178 aa).

Residues 1-15 (MADGKAGDEKPEKSQ) are compositionally biased toward basic and acidic residues. The tract at residues 1–82 (MADGKAGDEK…FAIGSQTTKK (82 aa)) is disordered. Position 2 is an N-acetylalanine (Ala2). The segment covering 37-47 (SSSNGGESSSR) has biased composition (low complexity). Ser53 carries the post-translational modification Phosphoserine. Residue Lys64 is modified to N6-acetyllysine. Ser77, Ser87, and Ser119 each carry phosphoserine. Residues 134–178 (NIGRDTPTSAGPNSFNKGKHGFSDNQKLWERNIKSHLGNVHDQDN) form a disordered region. The residue at position 139 (Thr139) is a Phosphothreonine. Over residues 139-149 (TPTSAGPNSFN) the composition is skewed to polar residues. The residue at position 147 (Ser147) is a Phosphoserine. N6-acetyllysine occurs at positions 150 and 152. A compositionally biased stretch (basic and acidic residues) spans 160-178 (KLWERNIKSHLGNVHDQDN).

Interacts with UHRF2/NIRF. In terms of processing, ubiquitinated; mediated by UHRF2 and leading to its subsequent proteasomal degradation. N-terminally acetylated in a HYPK-dependent manner by the NatA acetyltransferase complex which is composed of NAA10 and NAA15.

It is found in the nucleus. Functionally, may be involved in cell cycle regulation. The protein is PEST proteolytic signal-containing nuclear protein (PCNP) of Homo sapiens (Human).